A 552-amino-acid polypeptide reads, in one-letter code: TBCC domain-containing protein 1 (552 aa).

One can recognise a C-CAP/cofactor C-like domain in the interval 304-435; sequence PRLHRIVVMS…LEDHMARTGL (132 aa).

This sequence belongs to the TBCC family. In terms of tissue distribution, expressed in brain and testis (at protein level).

The protein localises to the cytoplasm. It is found in the cytoskeleton. Its subcellular location is the microtubule organizing center. It localises to the centrosome. The protein resides in the spindle pole. In terms of biological role, plays a role in the regulation of centrosome and Golgi apparatus positioning, with consequences on cell shape and cell migration. The chain is TBCC domain-containing protein 1 (Tbccd1) from Mus musculus (Mouse).